Consider the following 115-residue polypeptide: T cell receptor beta variable 7-7 (115 aa).

Residues 1–21 form the signal peptide; sequence MGTSLLCWVVLGFLGTDHTGA. Residues 22–115 enclose the Ig-like domain; sequence GVSQSPRYKV…SAMYRCASSL (94 aa). An intrachain disulfide couples Cys42 to Cys111.

Alpha-beta TR is a heterodimer composed of an alpha and beta chain; disulfide-linked. The alpha-beta TR is associated with the transmembrane signaling CD3 coreceptor proteins to form the TR-CD3 (TcR or TCR). The assembly of alpha-beta TR heterodimers with CD3 occurs in the endoplasmic reticulum where a single alpha-beta TR heterodimer associates with one CD3D-CD3E heterodimer, one CD3G-CD3E heterodimer and one CD247 homodimer forming a stable octameric structure. CD3D-CD3E and CD3G-CD3E heterodimers preferentially associate with TR alpha and TR beta chains, respectively. The association of the CD247 homodimer is the last step of TcR assembly in the endoplasmic reticulum and is required for transport to the cell surface.

It is found in the cell membrane. In terms of biological role, v region of the variable domain of T cell receptor (TR) beta chain that participates in the antigen recognition. Alpha-beta T cell receptors are antigen specific receptors which are essential to the immune response and are present on the cell surface of T lymphocytes. Recognize peptide-major histocompatibility (MH) (pMH) complexes that are displayed by antigen presenting cells (APC), a prerequisite for efficient T cell adaptive immunity against pathogens. Binding of alpha-beta TR to pMH complex initiates TR-CD3 clustering on the cell surface and intracellular activation of LCK that phosphorylates the ITAM motifs of CD3G, CD3D, CD3E and CD247 enabling the recruitment of ZAP70. In turn ZAP70 phosphorylates LAT, which recruits numerous signaling molecules to form the LAT signalosome. The LAT signalosome propagates signal branching to three major signaling pathways, the calcium, the mitogen-activated protein kinase (MAPK) kinase and the nuclear factor NF-kappa-B (NF-kB) pathways, leading to the mobilization of transcription factors that are critical for gene expression and essential for T cell growth and differentiation. The T cell repertoire is generated in the thymus, by V-(D)-J rearrangement. This repertoire is then shaped by intrathymic selection events to generate a peripheral T cell pool of self-MH restricted, non-autoaggressive T cells. Post-thymic interaction of alpha-beta TR with the pMH complexes shapes TR structural and functional avidity. The chain is T cell receptor beta variable 7-7 from Homo sapiens (Human).